A 138-amino-acid chain; its full sequence is Acidic phospholipase A2 BmooPLA2 (138 aa).

Residues 1-16 form the signal peptide; it reads MRTLWIVAVLLLGVEG. 7 disulfide bridges follow: Cys42-Cys131, Cys44-Cys60, Cys59-Cys111, Cys65-Cys138, Cys66-Cys104, Cys73-Cys97, and Cys91-Cys102. Ca(2+) contacts are provided by Tyr43, Gly45, and Gly47. The active site involves His63. Asp64 contributes to the Ca(2+) binding site. Asp105 is a catalytic residue.

The protein belongs to the phospholipase A2 family. Group II subfamily. D49 sub-subfamily. Requires Ca(2+) as cofactor. As to expression, expressed by the venom gland.

Its subcellular location is the secreted. It catalyses the reaction a 1,2-diacyl-sn-glycero-3-phosphocholine + H2O = a 1-acyl-sn-glycero-3-phosphocholine + a fatty acid + H(+). In terms of biological role, snake venom phospholipase A2 (PLA2) that inhibits ADP- and collagen-induced platelet aggregation, has edema-inducing, anti-coagulant activity, antibacterial activity, and cytotoxic activity. In vivo, has a hypotensive effect. PLA2 catalyzes the calcium-dependent hydrolysis of the 2-acyl groups in 3-sn-phosphoglycerides. The sequence is that of Acidic phospholipase A2 BmooPLA2 from Bothrops moojeni (Lance-headed viper).